Consider the following 422-residue polypeptide: Phospho-N-acetylmuramoyl-pentapeptide-transferase (422 aa).

Transmembrane regions (helical) follow at residues L28 to L48, V71 to L91, L95 to F115, I136 to V156, A211 to A231, G239 to S259, L279 to Y299, I313 to L333, and K399 to L419.

It belongs to the glycosyltransferase 4 family. MraY subfamily. It depends on Mg(2+) as a cofactor.

It is found in the cell inner membrane. The catalysed reaction is UDP-N-acetyl-alpha-D-muramoyl-L-alanyl-gamma-D-glutamyl-meso-2,6-diaminopimeloyl-D-alanyl-D-alanine + di-trans,octa-cis-undecaprenyl phosphate = di-trans,octa-cis-undecaprenyl diphospho-N-acetyl-alpha-D-muramoyl-L-alanyl-D-glutamyl-meso-2,6-diaminopimeloyl-D-alanyl-D-alanine + UMP. It participates in cell wall biogenesis; peptidoglycan biosynthesis. In terms of biological role, catalyzes the initial step of the lipid cycle reactions in the biosynthesis of the cell wall peptidoglycan: transfers peptidoglycan precursor phospho-MurNAc-pentapeptide from UDP-MurNAc-pentapeptide onto the lipid carrier undecaprenyl phosphate, yielding undecaprenyl-pyrophosphoryl-MurNAc-pentapeptide, known as lipid I. The protein is Phospho-N-acetylmuramoyl-pentapeptide-transferase of Bacteroides thetaiotaomicron (strain ATCC 29148 / DSM 2079 / JCM 5827 / CCUG 10774 / NCTC 10582 / VPI-5482 / E50).